A 318-amino-acid chain; its full sequence is NADH-ubiquinone oxidoreductase chain 1 (318 aa).

The next 8 membrane-spanning stretches (helical) occupy residues 3–23 (TMNL…LTLV), 69–89 (ILYI…WTPL), 98–118 (FNLG…SILW), 135–155 (AVAQ…SILL), 171–191 (HLWL…STLA), 217–237 (AGPF…MNAL), 253–273 (ELFT…FLWI), and 294–314 (LPLT…ISSI).

It belongs to the complex I subunit 1 family. In terms of assembly, core subunit of respiratory chain NADH dehydrogenase (Complex I) which is composed of 45 different subunits.

Its subcellular location is the mitochondrion inner membrane. The enzyme catalyses a ubiquinone + NADH + 5 H(+)(in) = a ubiquinol + NAD(+) + 4 H(+)(out). In terms of biological role, core subunit of the mitochondrial membrane respiratory chain NADH dehydrogenase (Complex I) which catalyzes electron transfer from NADH through the respiratory chain, using ubiquinone as an electron acceptor. Essential for the catalytic activity and assembly of complex I. This Papio hamadryas (Hamadryas baboon) protein is NADH-ubiquinone oxidoreductase chain 1 (MT-ND1).